The primary structure comprises 894 residues: MSRFYRRGASDSDTDSSEDEVEELKANKSAKFRDDLDFMAGPEEDEKRVVRAQKDKKFDELKSLIKQNRDAKSNKDLNKLLTGFDTLAKAYDKSKTIFQRQNVTNPRFYIRFLVEIEDYVNKLWEDKEAKAALSKNNTKALSPLRQKLKKYIKDHGLTDLVSDYRANPDEDGYETPEDENDEDDFEEVPEASPGRQAERAADSESESDSDDDDSFNWSSEPDTNSSDDEENVTKMEQLRRYFLKKEFREESKDDKKDKRKRVIKVKEVVEEDDDDWTPVSREKSVVHFDPNEEVTHDVMIKKLNEVMSARGKRTTDRNQHVANLQKLLEVAEEKQLGLGISVKISFCIISALFELNAKISDYMEYETFMNTLRTVNTLLDLLITTDRVKLSVTYAEEDENLKDENEEYRIQGSILIAVQRLDGELAKILQNADCHSNDYIEKLKAEKDMCQLIEKAENYVELRNHLGIFDKHEVCKVYMMRIEHTYYKYQDQNVGEVAKTMDYLCNKIYTLDDEKRLRQRAMLCHVYFLAVHDKWHRARDLLLMSHMQAIVDHSDVDTQILYNRTICQLGLCAFRHGFIREAHQGLSEIQNTQRAKELLAQAVGTRPHEKTAEQEKIDRSRQVPYHMHINVELMECVYLICSMLLEIPHMASCEFEMRRRMLSRSFHYQLKQSEKASLTGPPENTREHVVAASKAMLNGDWKKCKDYIVNEKMNQKVWNLFHNADQVKDMVVRRIQEESLRTYLLTYSTVYSTVSLKKLASLFDLSKKDVHSIISKMIIQEELSATLDEPTDCLIMHRVEPSRLQMLALNLSDKLQTLAENNEQILEPRTGRGGYQGPGSWFPGRNERQGDKQKGSGGFQGERRGGPGGPDGKRGNWGSQGGQQRRHPQKPRAF.

2 disordered regions span residues 1–28 and 162–235; these read MSRF…KANK and SDYR…VTKM. Acidic residues-rich tracts occupy residues 12 to 22, 169 to 189, and 203 to 214; these read SDTDSSEDEVE, DEDG…EEVP, and SESESDSDDDDS. Positions 215 to 224 are enriched in polar residues; sequence FNWSSEPDTN. Positions 625–801 constitute a PCI domain; sequence YHMHINVELM…DCLIMHRVEP (177 aa). The interval 824–894 is disordered; sequence QILEPRTGRG…RRHPQKPRAF (71 aa). A compositionally biased stretch (basic and acidic residues) spans 845-854; the sequence is RNERQGDKQK. Residues 855–870 are compositionally biased toward gly residues; it reads GSGGFQGERRGGPGGP. Residues 884-894 are compositionally biased toward basic residues; sequence QRRHPQKPRAF.

This sequence belongs to the eIF-3 subunit C family. As to quaternary structure, component of the eukaryotic translation initiation factor 3 (eIF-3) complex.

It localises to the cytoplasm. Its function is as follows. Component of the eukaryotic translation initiation factor 3 (eIF-3) complex, which is involved in protein synthesis of a specialized repertoire of mRNAs and, together with other initiation factors, stimulates binding of mRNA and methionyl-tRNAi to the 40S ribosome. The eIF-3 complex specifically targets and initiates translation of a subset of mRNAs involved in cell proliferation. The polypeptide is Eukaryotic translation initiation factor 3 subunit C (Caenorhabditis briggsae).